The following is a 354-amino-acid chain: MRFDLEPPSSVAAAHRIGVLLINLGTPDAPTPRAVRRYLAEFLSDPRVVEIPQAVWQVLLRTLILPLRGRASAKKYAAVWMPEGSPLRVYTERQTDSVRHLLTSNGYHVMVDYAMRYGSPNISHALTQFKRAGVERVLLMPMYPQYSASTTATAFDAAFDALARMRNQPEVRTVRHYADHPAYIHALAEQVRQYWAQHGRPDFAAGDKLVLSFHGVPKRTLDLGDPYHDQCQQTGALLMAALGLSTTECHVTFQSRFGKAEWLQPYTAPTLREFGEAGVRRADVFCPGFTADCLETIEEIGMEVRDEFLAGGGKTFHRIPCLNGASAWIGALSEIVAENLQGWPVKAAQPEPVN.

Residues H214 and E295 each coordinate Fe cation.

This sequence belongs to the ferrochelatase family.

Its subcellular location is the cytoplasm. It catalyses the reaction heme b + 2 H(+) = protoporphyrin IX + Fe(2+). Its pathway is porphyrin-containing compound metabolism; protoheme biosynthesis; protoheme from protoporphyrin-IX: step 1/1. In terms of biological role, catalyzes the ferrous insertion into protoporphyrin IX. The protein is Ferrochelatase of Burkholderia orbicola (strain AU 1054).